A 1022-amino-acid chain; its full sequence is Sodium/potassium-transporting ATPase subunit alpha (1022 aa).

Positions 1–5 (MGKGA) are excised as a propeptide. The tract at residues 1–34 (MGKGAASEKYQPAATSENAKNSKKSKSKTTDLDE) is disordered. The Cytoplasmic segment spans residues 6 to 87 (ASEKYQPAAT…NALTPPPTTP (82 aa)). Residue Ser16 is modified to Phosphoserine; by PKC. The tract at residues 82–84 (PPP) is interaction with phosphoinositide-3 kinase. The chain crosses the membrane as a helical span at residues 88-108 (EWIKFCRQLFGGFSILLWTGA). The Lumenal portion of the chain corresponds to 109-131 (ILCFLAYGIQVATVDNPANDNLY). Residues 132-152 (LGVVLSTVVIITGCFSYYQEA) traverse the membrane as a helical segment. Residues 153 to 288 (KSSKIMDSFK…VGQTPIAAEI (136 aa)) lie on the Cytoplasmic side of the membrane. A disordered region spans residues 215–235 (NSSLTGESEPQSRSPEYSSEN). A helical membrane pass occupies residues 289–308 (EHFIHIITGVAVFLGVSFFI). Residues 309–320 (LSLILGYTWLEA) are Lumenal-facing. The helical transmembrane segment at 321-338 (VIFLIGIIVANVPEGLLA) threads the bilayer. Topologically, residues 339–771 (TVTVCLTLTA…EEGRLIFDNL (433 aa)) are cytoplasmic. Asp376 serves as the catalytic 4-aspartylphosphate intermediate. Asp716 and Asp720 together coordinate Mg(2+). Residues 772-791 (KKSIAYTLTSNIPEITPFLV) traverse the membrane as a helical segment. The Lumenal portion of the chain corresponds to 792–801 (FIIANVPLPL). A helical membrane pass occupies residues 802–822 (GTVTILCIDLGTDMVPAISLA). Over 823–842 (YERAESDIMKRQPRNPKTDK) the chain is Cytoplasmic. The chain crosses the membrane as a helical span at residues 843 to 865 (LVNERLISMAYGQIGMIQALGGF). Topologically, residues 866 to 917 (FSYFVILAENGFLPIDLIGIREKWDELWTQDLEDSYGQQWTYEQRKIVEYTC) are lumenal. A helical membrane pass occupies residues 918–937 (HTSFFVSIVIVQWADLIICK). Residues 938 to 950 (TRRNSIFQQGMKN) are Cytoplasmic-facing. Ser942 carries the post-translational modification Phosphoserine; by PKA. A helical transmembrane segment spans residues 951-969 (KILIFGLFEETALAAFLSY). At 970 to 984 (TPGTDIALRMYPLKP) the chain is on the lumenal side. Residues 985-1005 (SWWFCAFPYSLIIFLYDEARR) traverse the membrane as a helical segment. Residues 1006–1022 (FILRRNPGGWVEQETYY) lie on the Cytoplasmic side of the membrane.

The protein belongs to the cation transport ATPase (P-type) (TC 3.A.3) family. Type IIC subfamily. As to quaternary structure, the sodium/potassium-transporting ATPase is composed of a catalytic alpha subunit, an auxiliary non-catalytic beta subunit and an additional regulatory subunit.

It is found in the cell membrane. The enzyme catalyses K(+)(out) + Na(+)(in) + ATP + H2O = K(+)(in) + Na(+)(out) + ADP + phosphate + H(+). Its function is as follows. This is the catalytic component of the active enzyme, which catalyzes the hydrolysis of ATP coupled with the exchange of sodium and potassium ions across the plasma membrane. This action creates the electrochemical gradient of sodium and potassium ions, providing the energy for active transport of various nutrients. This Tetronarce californica (Pacific electric ray) protein is Sodium/potassium-transporting ATPase subunit alpha.